Consider the following 1183-residue polypeptide: Polyphosphatidylinositol phosphatase INP52 (1183 aa).

Residues 133–153 are compositionally biased toward low complexity; that stretch reads PPSISTHSSRSSLRSSSSRSL. Residues 133–161 form a disordered region; it reads PPSISTHSSRSSLRSSSSRSLNAQEQAPK. The residue at position 152 (serine 152) is a Phosphoserine. An SAC domain is found at 167 to 507; it reads LRKLLSNGSF…GDQISQIYTG (341 aa). Serine 522 is subject to Phosphoserine. Residues 955–968 show a composition bias toward low complexity; sequence SPLLSGPSPQPSVV. A disordered region spans residues 955–1183; it reads SPLLSGPSPQ…VHPLKPCDPN (229 aa). 2 positions are modified to phosphoserine: serine 1005 and serine 1016. Threonine 1032 carries the phosphothreonine modification. Polar residues-rich tracts occupy residues 1046–1057, 1082–1100, and 1130–1145; these read KPVSLQKSSSEL, STAP…VSTT, and KLNT…SPSN. Residue serine 1095 is modified to Phosphoserine.

The protein belongs to the synaptojanin family. In the central section; belongs to the inositol 1,4,5-trisphosphate 5-phosphatase family. Interacts (via SAC domain) with BSP1; the interaction is direct. Interacts with ABP1.

The protein localises to the cytoplasm. The protein resides in the cytoskeleton. It localises to the actin patch. It carries out the reaction a 1,2-diacyl-sn-glycero-3-phospho-(1D-myo-inositol-4,5-bisphosphate) + H2O = a 1,2-diacyl-sn-glycero-3-phospho-(1D-myo-inositol 4-phosphate) + phosphate. Dephosphorylates a number of phosphatidylinositols (PIs) like phosphatidylinositol 4,5-bisphosphate (PtdIns(4,5)P2), but also phosphatidylinositol 3-phosphate (PtdIns(3)P), phosphatidylinositol 4-phosphate (PtdIns(4)P), and phosphatidylinositol 3,5-bisphosphate (PtdIns(3,5)P2). Controls the cellular levels and subcellular distribution of phosphatidylinositol 3-phosphate and phosphatidylinositol 4,5-bisphosphate. Specifically functions within the early endocytic pathway and actin organization. The chain is Polyphosphatidylinositol phosphatase INP52 from Saccharomyces cerevisiae (strain ATCC 204508 / S288c) (Baker's yeast).